Consider the following 190-residue polypeptide: Protein GrpE (190 aa).

A compositionally biased stretch (polar residues) spans 1-31 (MTETPNTSSEEIQTSEPSSDNELQTLQQENA). Residues 1–34 (MTETPNTSSEEIQTSEPSSDNELQTLQQENANLK) are disordered.

The protein belongs to the GrpE family. Homodimer.

It is found in the cytoplasm. Its function is as follows. Participates actively in the response to hyperosmotic and heat shock by preventing the aggregation of stress-denatured proteins, in association with DnaK and GrpE. It is the nucleotide exchange factor for DnaK and may function as a thermosensor. Unfolded proteins bind initially to DnaJ; upon interaction with the DnaJ-bound protein, DnaK hydrolyzes its bound ATP, resulting in the formation of a stable complex. GrpE releases ADP from DnaK; ATP binding to DnaK triggers the release of the substrate protein, thus completing the reaction cycle. Several rounds of ATP-dependent interactions between DnaJ, DnaK and GrpE are required for fully efficient folding. The chain is Protein GrpE from Chlamydia muridarum (strain MoPn / Nigg).